The sequence spans 177 residues: Shikimate kinase (177 aa).

14–19 serves as a coordination point for ATP; sequence GSGKST. S18 is a Mg(2+) binding site. Substrate-binding residues include D36, R60, and G82. Residue R120 coordinates ATP. R139 contributes to the substrate binding site.

It belongs to the shikimate kinase family. In terms of assembly, monomer. Requires Mg(2+) as cofactor.

The protein resides in the cytoplasm. It carries out the reaction shikimate + ATP = 3-phosphoshikimate + ADP + H(+). The protein operates within metabolic intermediate biosynthesis; chorismate biosynthesis; chorismate from D-erythrose 4-phosphate and phosphoenolpyruvate: step 5/7. In terms of biological role, catalyzes the specific phosphorylation of the 3-hydroxyl group of shikimic acid using ATP as a cosubstrate. The polypeptide is Shikimate kinase (Gloeobacter violaceus (strain ATCC 29082 / PCC 7421)).